We begin with the raw amino-acid sequence, 268 residues long: 3-methyl-2-oxobutanoate hydroxymethyltransferase (268 aa).

Positions 46 and 85 each coordinate Mg(2+). 3-methyl-2-oxobutanoate is bound by residues 46 to 47 (DS), Asp85, and Lys114. Glu116 is a Mg(2+) binding site. Glu183 (proton acceptor) is an active-site residue.

Belongs to the PanB family. Homodecamer; pentamer of dimers. It depends on Mg(2+) as a cofactor.

It is found in the cytoplasm. The enzyme catalyses 3-methyl-2-oxobutanoate + (6R)-5,10-methylene-5,6,7,8-tetrahydrofolate + H2O = 2-dehydropantoate + (6S)-5,6,7,8-tetrahydrofolate. The protein operates within cofactor biosynthesis; coenzyme A biosynthesis. Catalyzes the reversible reaction in which hydroxymethyl group from 5,10-methylenetetrahydrofolate is transferred onto alpha-ketoisovalerate to form ketopantoate. This chain is 3-methyl-2-oxobutanoate hydroxymethyltransferase, found in Sulfolobus acidocaldarius (strain ATCC 33909 / DSM 639 / JCM 8929 / NBRC 15157 / NCIMB 11770).